The primary structure comprises 178 residues: Large ribosomal subunit protein uL6 (178 aa).

It belongs to the universal ribosomal protein uL6 family. Part of the 50S ribosomal subunit.

This protein binds to the 23S rRNA, and is important in its secondary structure. It is located near the subunit interface in the base of the L7/L12 stalk, and near the tRNA binding site of the peptidyltransferase center. This Campylobacter concisus (strain 13826) protein is Large ribosomal subunit protein uL6.